A 445-amino-acid polypeptide reads, in one-letter code: Oxysterols receptor LXR-alpha (445 aa).

2 disordered regions span residues 1–34 (MSLWLEASMPDVSPDSATELWKTEPQDAGDQGGN) and 63–86 (ALLPRAETLPEPTELRPQKRKKGP). The segment at 1 to 94 (MSLWLEASMP…GPAPKMLGNE (94 aa)) is transactivation AF-1; required for ligand-independent transactivation function. Residues 93–168 (NELCSVCGDK…AGMREECVLS (76 aa)) constitute a DNA-binding region (nuclear receptor). 2 consecutive NR C4-type zinc fingers follow at residues 96–116 (CSVCGDKASGFHYNVLSCEGC) and 132–156 (CHSGGHCPMDTYMRRKCQECRLRKC). A Phosphoserine modification is found at S191. The transactivation AF-2; required for ligand-dependent transactivation function; mediates interaction with CCAR2 stretch occupies residues 203-445 (QLSPEQLGMI…LLSEIWDVHE (243 aa)). The NR LBD domain maps to 207–445 (EQLGMIEKLV…LLSEIWDVHE (239 aa)).

It belongs to the nuclear hormone receptor family. NR1 subfamily. As to quaternary structure, heterodimer of NR1H3 and RXR (retinoic acid receptor). Interacts with CCAR2 (via N-terminus) in a ligand-independent manner. Interacts with SIRT1 and this interaction is inhibited by CCAR2. In terms of processing, ubiquitinated. Ubiquitination by UBR5 leads to its degradation: UBR5 specifically recognizes and binds ligand-bound NR1H3 when it is not associated with coactivators (NCOAs). In presence of NCOAs, the UBR5-degron is not accessible, preventing its ubiquitination and degradation.

The protein resides in the nucleus. Its subcellular location is the cytoplasm. Its function is as follows. Nuclear receptor that exhibits a ligand-dependent transcriptional activation activity. Interaction with retinoic acid receptor (RXR) shifts RXR from its role as a silent DNA-binding partner to an active ligand-binding subunit in mediating retinoid responses through target genes defined by LXRES. LXRES are DR4-type response elements characterized by direct repeats of two similar hexanuclotide half-sites spaced by four nucleotides. Plays an important role in the regulation of cholesterol homeostasis, regulating cholesterol uptake through MYLIP-dependent ubiquitination of LDLR, VLDLR and LRP8. Interplays functionally with RORA for the regulation of genes involved in liver metabolism. Induces LPCAT3-dependent phospholipid remodeling in endoplasmic reticulum (ER) membranes of hepatocytes, driving SREBF1 processing and lipogenesis. Via LPCAT3, triggers the incorporation of arachidonate into phosphatidylcholines of ER membranes, increasing membrane dynamics and enabling triacylglycerols transfer to nascent very low-density lipoprotein (VLDL) particles. Via LPCAT3 also counteracts lipid-induced ER stress response and inflammation, likely by modulating SRC kinase membrane compartmentalization and limiting the synthesis of lipid inflammatory mediators. In Mus musculus (Mouse), this protein is Oxysterols receptor LXR-alpha (Nr1h3).